The chain runs to 530 residues: Cytochrome P450 monooxygenase apf7 (530 aa).

A helical membrane pass occupies residues 6 to 26 (VSPVSIWVFVIYAVTIIIAIY). The N-linked (GlcNAc...) asparagine glycan is linked to N85. Residue C464 coordinates heme.

Belongs to the cytochrome P450 family. Heme is required as a cofactor.

Its subcellular location is the membrane. It functions in the pathway secondary metabolite biosynthesis. Cytochrome P450 monooxygenase; part of the gene cluster that mediates the biosynthesis of the cyclic tetrapeptide apicidin F (APF). The non-ribosomal peptide synthetase apf1 incorporates four different amino acids to produce apicidin F: L-phenylalanine, D-pipecolic acid (D-pip), N-methoxy-L-tryptophan and L-2-aminooctanedioic acid. L-Phenylalanine is the only proteinogenic amino acid directly used by apf1. The 3 other apf1 substrates are non-proteinogenic and have to be modified by other enzymes of the cluster. Lysine is converted to delta-1-pyrroline-5-carboxylate (P5C) which is reduced to L-pipecolic acid (L-pip) by apf3. L-pip is epimerized to D-pip, probably by apf1 activity, prior to incorporation. L-Tryptophan is N-oxidyzed by one of the cytochrome P450 monooxygenases (apf7 or apf8), and further methylated at the hydroxy group by the O-methyltransferase apf6 to yield N-methoxy-L-tryptophan. The synthesis of the fourth apf1 substrate is more complex. The fatty acid synthase apf5 is involved in the synthesis of the octanoic acid backbone of L-2-aminooctanedioic acid by fixing one acetyl-CoA unit and three malonyl-CoA units. Then one of the cytochrome P450 monooxygenases (apf7 or apf8) may oxidize this backbone to 2-oxooctanoic acid. The aminotransferase apf4 is predicted to catalyze the exchange of the keto group with an amino group. The next step would be the oxidation of 2-aminooctanoic acid by one of the cytochrome P450 monooxygenases (apf7 or apf8). The last step is the oxidation of 2-amino-8-hydroxyoctanoic acid to 2-aminooctanedioic acid is catalyzed by the FAD-dependent monooxygenase apf9. In Gibberella fujikuroi (strain CBS 195.34 / IMI 58289 / NRRL A-6831) (Bakanae and foot rot disease fungus), this protein is Cytochrome P450 monooxygenase apf7.